Consider the following 328-residue polypeptide: D-cysteine desulfhydrase (328 aa).

K51 carries the N6-(pyridoxal phosphate)lysine modification.

This sequence belongs to the ACC deaminase/D-cysteine desulfhydrase family. Homodimer. Requires pyridoxal 5'-phosphate as cofactor.

It catalyses the reaction D-cysteine + H2O = hydrogen sulfide + pyruvate + NH4(+) + H(+). Catalyzes the alpha,beta-elimination reaction of D-cysteine and of several D-cysteine derivatives. It could be a defense mechanism against D-cysteine. This is D-cysteine desulfhydrase from Salmonella choleraesuis (strain SC-B67).